Consider the following 398-residue polypeptide: Yellow-related salivary protein SP04 (398 aa).

A signal peptide spans 1 to 18 (MKWFLFLLSTIFVQGILG). The interval 73-94 (TLTEIERKKHPERSPPLSKFSG) is disordered. The span at 75–85 (TEIERKKHPER) shows a compositional bias: basic and acidic residues.

It belongs to the major royal jelly protein family. Female salivary gland (at protein level).

It is found in the secreted. Functionally, probably modulates blood feeding of sand flies on vertebrate species by binding and sequestering different mediators involved in the host response. Binds biogenic amines. Binds serotonin with high affinity. Binds histamine with low affinity. In Phlebotomus argentipes (Phlebotomine sand fly), this protein is Yellow-related salivary protein SP04.